The chain runs to 95 residues: Large ribosomal subunit protein bL27 (95 aa).

The segment at M1–K24 is disordered. The span at T7–R20 shows a compositional bias: polar residues.

Belongs to the bacterial ribosomal protein bL27 family.

This chain is Large ribosomal subunit protein bL27, found in Trichodesmium erythraeum (strain IMS101).